The following is a 147-amino-acid chain: UPF0306 protein YhbP (147 aa).

Belongs to the UPF0306 family.

This Escherichia coli (strain K12 / MC4100 / BW2952) protein is UPF0306 protein YhbP.